The sequence spans 363 residues: tRNA dimethylallyltransferase (363 aa).

The interval 1–55 (MLACNDDTSLYLLVKQVTKKEIYSNDLENGNVKRGASMQSLYLIGDPKCCRNNSS) is unknown insert. Residue 65–72 (GPTASGKS) coordinates ATP. 67–72 (TASGKS) is a binding site for substrate. 2 interaction with substrate tRNA regions span residues 90-93 (DSMQ) and 214-218 (QRLIR).

Belongs to the IPP transferase family. Monomer. The cofactor is Mg(2+).

It carries out the reaction adenosine(37) in tRNA + dimethylallyl diphosphate = N(6)-dimethylallyladenosine(37) in tRNA + diphosphate. Catalyzes the transfer of a dimethylallyl group onto the adenine at position 37 in tRNAs that read codons beginning with uridine, leading to the formation of N6-(dimethylallyl)adenosine (i(6)A). The protein is tRNA dimethylallyltransferase of Rickettsia conorii (strain ATCC VR-613 / Malish 7).